Consider the following 33-residue polypeptide: Photosystem II reaction center protein T (33 aa).

Residues 3-23 traverse the membrane as a helical segment; that stretch reads ALVYTFLLVSTLGILFFSIFF.

The protein belongs to the PsbT family. In terms of assembly, PSII is composed of 1 copy each of membrane proteins PsbA, PsbB, PsbC, PsbD, PsbE, PsbF, PsbH, PsbI, PsbJ, PsbK, PsbL, PsbM, PsbT, PsbY, PsbZ, Psb30/Ycf12, at least 3 peripheral proteins of the oxygen-evolving complex and a large number of cofactors. It forms dimeric complexes.

Its subcellular location is the plastid. It localises to the chloroplast thylakoid membrane. In terms of biological role, found at the monomer-monomer interface of the photosystem II (PS II) dimer, plays a role in assembly and dimerization of PSII. PSII is a light-driven water plastoquinone oxidoreductase, using light energy to abstract electrons from H(2)O, generating a proton gradient subsequently used for ATP formation. The protein is Photosystem II reaction center protein T of Pelargonium hortorum (Common geranium).